Consider the following 281-residue polypeptide: Phosphatidylglycerol--prolipoprotein diacylglyceryl transferase (281 aa).

The next 7 membrane-spanning stretches (helical) occupy residues 11–31 (IIFT…VISF), 57–77 (LLYS…IIFY), 89–109 (VFYI…AIIV), 121–141 (ILEI…AGRI), 194–214 (PTQL…IYFF), 222–242 (GSIS…IEFF), and 255–275 (IITM…IIMY). Residue Arg-140 coordinates a 1,2-diacyl-sn-glycero-3-phospho-(1'-sn-glycerol).

The protein belongs to the Lgt family.

Its subcellular location is the cell inner membrane. It catalyses the reaction L-cysteinyl-[prolipoprotein] + a 1,2-diacyl-sn-glycero-3-phospho-(1'-sn-glycerol) = an S-1,2-diacyl-sn-glyceryl-L-cysteinyl-[prolipoprotein] + sn-glycerol 1-phosphate + H(+). It functions in the pathway protein modification; lipoprotein biosynthesis (diacylglyceryl transfer). Catalyzes the transfer of the diacylglyceryl group from phosphatidylglycerol to the sulfhydryl group of the N-terminal cysteine of a prolipoprotein, the first step in the formation of mature lipoproteins. This Buchnera aphidicola subsp. Acyrthosiphon pisum (strain 5A) protein is Phosphatidylglycerol--prolipoprotein diacylglyceryl transferase.